The sequence spans 172 residues: Ribosome maturation factor RimM (172 aa).

One can recognise a PRC barrel domain in the interval 100–172 (PGEYYRVDLV…RIVVDWDPGF (73 aa)).

This sequence belongs to the RimM family. As to quaternary structure, binds ribosomal protein uS19.

The protein localises to the cytoplasm. In terms of biological role, an accessory protein needed during the final step in the assembly of 30S ribosomal subunit, possibly for assembly of the head region. Essential for efficient processing of 16S rRNA. May be needed both before and after RbfA during the maturation of 16S rRNA. It has affinity for free ribosomal 30S subunits but not for 70S ribosomes. The sequence is that of Ribosome maturation factor RimM from Methylococcus capsulatus (strain ATCC 33009 / NCIMB 11132 / Bath).